The chain runs to 53 residues: ATP synthase protein 8 (53 aa).

A helical membrane pass occupies residues 10–30 (IMVFLVSMALLWAIMTMVFFL).

Belongs to the ATPase protein 8 family. In terms of assembly, F-type ATPases have 2 components, CF(1) - the catalytic core - and CF(0) - the membrane proton channel.

It is found in the mitochondrion membrane. In terms of biological role, mitochondrial membrane ATP synthase (F(1)F(0) ATP synthase or Complex V) produces ATP from ADP in the presence of a proton gradient across the membrane which is generated by electron transport complexes of the respiratory chain. F-type ATPases consist of two structural domains, F(1) - containing the extramembraneous catalytic core and F(0) - containing the membrane proton channel, linked together by a central stalk and a peripheral stalk. During catalysis, ATP synthesis in the catalytic domain of F(1) is coupled via a rotary mechanism of the central stalk subunits to proton translocation. Part of the complex F(0) domain. Minor subunit located with subunit a in the membrane. The chain is ATP synthase protein 8 (MT-ATP8) from Artemia franciscana (Brine shrimp).